We begin with the raw amino-acid sequence, 293 residues long: Pyridoxal 5'-phosphate synthase subunit PdxS (293 aa).

D23 is a binding site for D-ribose 5-phosphate. K80 (schiff-base intermediate with D-ribose 5-phosphate) is an active-site residue. G152 lines the D-ribose 5-phosphate pocket. D-glyceraldehyde 3-phosphate is bound at residue R164. Residues G213 and 234 to 235 (GS) each bind D-ribose 5-phosphate.

Belongs to the PdxS/SNZ family. In terms of assembly, in the presence of PdxT, forms a dodecamer of heterodimers.

The enzyme catalyses aldehydo-D-ribose 5-phosphate + D-glyceraldehyde 3-phosphate + L-glutamine = pyridoxal 5'-phosphate + L-glutamate + phosphate + 3 H2O + H(+). It functions in the pathway cofactor biosynthesis; pyridoxal 5'-phosphate biosynthesis. Its function is as follows. Catalyzes the formation of pyridoxal 5'-phosphate from ribose 5-phosphate (RBP), glyceraldehyde 3-phosphate (G3P) and ammonia. The ammonia is provided by the PdxT subunit. Can also use ribulose 5-phosphate and dihydroxyacetone phosphate as substrates, resulting from enzyme-catalyzed isomerization of RBP and G3P, respectively. This chain is Pyridoxal 5'-phosphate synthase subunit PdxS, found in Roseiflexus sp. (strain RS-1).